We begin with the raw amino-acid sequence, 227 residues long: Cytochrome c oxidase subunit 2 (227 aa).

The Mitochondrial intermembrane segment spans residues 1 to 26; it reads MSTWKNLFLQDSASPLMELLMCFHDH. The helical transmembrane segment at 27 to 48 threads the bilayer; it reads AMLILILITIMVSQMLLSMLFN. Over 49-62 the chain is Mitochondrial matrix; that stretch reads KLSHRYLLEGQLIE. Residues 63-82 form a helical membrane-spanning segment; the sequence is TIWTIIPAIILILIALPSLR. The Mitochondrial intermembrane segment spans residues 83-227; sequence LLYILDEINN…LFLNWVISKA (145 aa). Positions 161, 196, 198, 200, 204, and 207 each coordinate Cu cation. Glutamate 198 contributes to the Mg(2+) binding site.

It belongs to the cytochrome c oxidase subunit 2 family. As to quaternary structure, component of the cytochrome c oxidase (complex IV, CIV), a multisubunit enzyme composed of a catalytic core of 3 subunits and several supernumerary subunits. The complex exists as a monomer or a dimer and forms supercomplexes (SCs) in the inner mitochondrial membrane with ubiquinol-cytochrome c oxidoreductase (cytochrome b-c1 complex, complex III, CIII). Cu cation is required as a cofactor.

The protein localises to the mitochondrion inner membrane. The catalysed reaction is 4 Fe(II)-[cytochrome c] + O2 + 8 H(+)(in) = 4 Fe(III)-[cytochrome c] + 2 H2O + 4 H(+)(out). In terms of biological role, component of the cytochrome c oxidase, the last enzyme in the mitochondrial electron transport chain which drives oxidative phosphorylation. The respiratory chain contains 3 multisubunit complexes succinate dehydrogenase (complex II, CII), ubiquinol-cytochrome c oxidoreductase (cytochrome b-c1 complex, complex III, CIII) and cytochrome c oxidase (complex IV, CIV), that cooperate to transfer electrons derived from NADH and succinate to molecular oxygen, creating an electrochemical gradient over the inner membrane that drives transmembrane transport and the ATP synthase. Cytochrome c oxidase is the component of the respiratory chain that catalyzes the reduction of oxygen to water. Electrons originating from reduced cytochrome c in the intermembrane space (IMS) are transferred via the dinuclear copper A center (CU(A)) of subunit 2 and heme A of subunit 1 to the active site in subunit 1, a binuclear center (BNC) formed by heme A3 and copper B (CU(B)). The BNC reduces molecular oxygen to 2 water molecules using 4 electrons from cytochrome c in the IMS and 4 protons from the mitochondrial matrix. In Sitophilus granarius (Granary weevil), this protein is Cytochrome c oxidase subunit 2 (COII).